A 164-amino-acid chain; its full sequence is S-ribosylhomocysteine lyase (164 aa).

3 residues coordinate Fe cation: histidine 61, histidine 65, and cysteine 131.

It belongs to the LuxS family. In terms of assembly, homodimer. Fe cation serves as cofactor.

The catalysed reaction is S-(5-deoxy-D-ribos-5-yl)-L-homocysteine = (S)-4,5-dihydroxypentane-2,3-dione + L-homocysteine. Functionally, involved in the synthesis of autoinducer 2 (AI-2) which is secreted by bacteria and is used to communicate both the cell density and the metabolic potential of the environment. The regulation of gene expression in response to changes in cell density is called quorum sensing. Catalyzes the transformation of S-ribosylhomocysteine (RHC) to homocysteine (HC) and 4,5-dihydroxy-2,3-pentadione (DPD). The sequence is that of S-ribosylhomocysteine lyase from Bifidobacterium longum subsp. infantis (strain ATCC 15697 / DSM 20088 / JCM 1222 / NCTC 11817 / S12).